A 744-amino-acid polypeptide reads, in one-letter code: FHF complex subunit HOOK-interacting protein 2B (744 aa).

2 disordered regions span residues 184 to 213 (KTAR…LNRD) and 510 to 530 (LDSG…SSDG). The span at 197–213 (AGYRDKDCPHSDALNRD) shows a compositional bias: basic and acidic residues.

This sequence belongs to the FHIP family. In terms of tissue distribution, expressed in colon.

Able to activate MAPK/ERK and TGFB signaling pathways. May regulate the activity of genes involved in intestinal barrier function and immunoprotective inflammation. May play a role in cell proliferation. This is FHF complex subunit HOOK-interacting protein 2B from Mus musculus (Mouse).